The chain runs to 428 residues: Immunoglobulin superfamily containing leucine-rich repeat protein (428 aa).

Positions 1–18 (MQELHLLWWALLLGLAQA) are cleaved as a signal peptide. The LRRNT domain occupies 19–50 (CPEPCDCGEKYGFQIADCAYRDLEAVPPGFPA). The N-linked (GlcNAc...) asparagine glycan is linked to N51. LRR repeat units follow at residues 51-72 (NVTALSLSANRLPGLPEGAFRE), 75-96 (LLQSLWLAHNEIRMVAAGALAS), 99-122 (HLKSLDLSHNLISDFAWSDLHNLS), 123-144 (ALQLLKMDSNELTFIPRDAFRS), and 147-168 (ALRSLQLNHNRLHTLAEGTFTP). Residues 180–231 (NPFDCTCGIVWLKTWALATAVSIPEQDNIACTSPHVLKGTPLSRLPPLPCSA) enclose the LRRCT domain. Positions 232-343 (PSVQLSYQPS…GSAESSVDVA (112 aa)) constitute an Ig-like domain. C257 and C327 are joined by a disulfide. N-linked (GlcNAc...) asparagine glycosylation is present at N309.

It is found in the secreted. The polypeptide is Immunoglobulin superfamily containing leucine-rich repeat protein (ISLR) (Pongo abelii (Sumatran orangutan)).